A 581-amino-acid polypeptide reads, in one-letter code: Membrane protein insertase YidC (581 aa).

Residues 7–27 (ILIVALAVVSYLMVLQWNEDY) form a helical membrane-spanning segment. Residues 41 to 62 (AATPALPDTPADTASTGGDDIP) form a disordered region. Transmembrane regions (helical) follow at residues 365–385 (TVDY…LEVI), 388–408 (LLGN…LIFF), 458–478 (LGGC…YWVL), 489–509 (WMFW…PIIM), and 536–556 (PIIF…YWVV).

This sequence belongs to the OXA1/ALB3/YidC family. Type 1 subfamily. In terms of assembly, interacts with the Sec translocase complex via SecD. Specifically interacts with transmembrane segments of nascent integral membrane proteins during membrane integration.

The protein localises to the cell inner membrane. In terms of biological role, required for the insertion and/or proper folding and/or complex formation of integral membrane proteins into the membrane. Involved in integration of membrane proteins that insert both dependently and independently of the Sec translocase complex, as well as at least some lipoproteins. Aids folding of multispanning membrane proteins. This chain is Membrane protein insertase YidC, found in Ectopseudomonas mendocina (strain ymp) (Pseudomonas mendocina).